Reading from the N-terminus, the 278-residue chain is Probable esterase TOX9 (278 aa).

Residues serine 119, aspartate 222, and histidine 250 each act as charge relay system in the active site.

This sequence belongs to the LovG family.

It participates in mycotoxin biosynthesis. In terms of biological role, probable esterase; part of the Tox1A locus, one of the 2 loci that mediate the biosynthesis of T-toxin, a family of linear polyketides 37 to 45 carbons in length, of which the major component is 41 carbons, and which leads to high virulence to maize. One of the PKSs (PKS1 or PKS2) could synthesize a precursor, used subsequently by the other PKS as starter unit, to add additional carbons. Variability in the length of the final carbon backbone C35-47 could be achieved by varying the number of condensation cycles, or use of different starter or extender units or might be due to decarboxylation of the penultimate product, catalyzed by DEC1. Additional proteins are required for the biosynthesis of T-toxin, including oxidoreductases RED1, RED2, RED3, LAM1 and OXI1, as well as esterase TOX9. This chain is Probable esterase TOX9, found in Cochliobolus heterostrophus (strain C4 / ATCC 48331 / race T) (Southern corn leaf blight fungus).